Reading from the N-terminus, the 234-residue chain is Putative N-acetylmannosamine-6-phosphate 2-epimerase (234 aa).

The protein belongs to the NanE family.

The enzyme catalyses an N-acyl-D-glucosamine 6-phosphate = an N-acyl-D-mannosamine 6-phosphate. It functions in the pathway amino-sugar metabolism; N-acetylneuraminate degradation; D-fructose 6-phosphate from N-acetylneuraminate: step 3/5. Its function is as follows. Converts N-acetylmannosamine-6-phosphate (ManNAc-6-P) to N-acetylglucosamine-6-phosphate (GlcNAc-6-P). The chain is Putative N-acetylmannosamine-6-phosphate 2-epimerase from Klebsiella pneumoniae subsp. pneumoniae (strain ATCC 700721 / MGH 78578).